The chain runs to 508 residues: Glycerol kinase (508 aa).

Threonine 14 is an ADP binding site. Residues threonine 14, threonine 15, and serine 16 each coordinate ATP. Sn-glycerol 3-phosphate is bound at residue threonine 14. Residue arginine 18 coordinates ADP. 3 residues coordinate sn-glycerol 3-phosphate: arginine 84, glutamate 85, and tyrosine 136. Glycerol contacts are provided by arginine 84, glutamate 85, and tyrosine 136. At histidine 232 the chain carries Phosphohistidine; by HPr. Aspartate 246 serves as a coordination point for sn-glycerol 3-phosphate. Positions 246 and 247 each coordinate glycerol. ADP contacts are provided by threonine 268 and glycine 311. ATP contacts are provided by threonine 268, glycine 311, glutamine 315, and glycine 412. ADP contacts are provided by glycine 412 and asparagine 416.

This sequence belongs to the FGGY kinase family. As to quaternary structure, homotetramer and homodimer (in equilibrium). The phosphoenolpyruvate-dependent sugar phosphotransferase system (PTS), including enzyme I, and histidine-containing protein (HPr) are required for the phosphorylation, which leads to the activation of the enzyme.

The enzyme catalyses glycerol + ATP = sn-glycerol 3-phosphate + ADP + H(+). Its pathway is polyol metabolism; glycerol degradation via glycerol kinase pathway; sn-glycerol 3-phosphate from glycerol: step 1/1. With respect to regulation, activated by phosphorylation and inhibited by fructose 1,6-bisphosphate (FBP). Functionally, key enzyme in the regulation of glycerol uptake and metabolism. Catalyzes the phosphorylation of glycerol to yield sn-glycerol 3-phosphate. In Streptococcus pyogenes serotype M12 (strain MGAS2096), this protein is Glycerol kinase.